We begin with the raw amino-acid sequence, 177 residues long: Probetacellulin (177 aa).

The N-terminal stretch at 1–31 (MDPTAPGSSVSSLPLLLVLALGLAILHCVVA) is a signal peptide. The Extracellular portion of the chain corresponds to 32–118 (DGNTTRTPET…LFYLQQDRGQ (87 aa)). N-linked (GlcNAc...) asparagine glycans are attached at residues Asn34, Asn42, and Asn52. The EGF-like domain maps to 65–105 (HFSRCPKQYKHYCIHGRCRFVVDEQTPSCICEKGYFGARCE). Disulfide bonds link Cys69–Cys82, Cys77–Cys93, and Cys95–Cys104. The propeptide at 112–177 (LQQDRGQILV…SEDIQETNIA (66 aa)) is removed in mature form. Residues 119–139 (ILVVCLIVVMVVFIILVIGVC) traverse the membrane as a helical segment. The Cytoplasmic portion of the chain corresponds to 140 to 177 (TCCHPLRKHRKKKKEEKMETLDKDKTPISEDIQETNIA). The disordered stretch occupies residues 153 to 177 (KEEKMETLDKDKTPISEDIQETNIA). Over residues 154 to 167 (EEKMETLDKDKTPI) the composition is skewed to basic and acidic residues.

Monomer. Interacts with EGFR and ERBB4. In terms of tissue distribution, found in several mouse tissues including kidney, uterus and liver, as well as in beta tumor cell line and MCF-7 cells. It is not detected in the brain.

It is found in the secreted. The protein localises to the extracellular space. It localises to the cell membrane. Its function is as follows. Growth factor that binds to EGFR, ERBB4 and other EGF receptor family members. Potent mitogen for retinal pigment epithelial cells and vascular smooth muscle cells. The sequence is that of Probetacellulin (Btc) from Mus musculus (Mouse).